A 301-amino-acid polypeptide reads, in one-letter code: MIKSFNEIIMKVKSKEMKKVAVAVAQDEPVLEAVRDAKKNGIADAILVGDHDEIVSIALKIGMDVNDFEIVNEPNVKKAALKAVELVSTGKADMVMKGLVNTATFLRSVLNKEVGLRTGKTMSHVAVFETEKFDRLLFLTDVAFNTYPELKEKIDIVNNSVKVAHAIGIENPKVAPICAVEVINPKMPSTLDAAMLSKMSDRGQIKGCVVDGPLALDIALSEEAAHHKGVTGEVAGKADIFLMPNIETGNVMYKTLTYTTDSKNGGILVGTSAPVVLTSRADSHETKMNSIALAALVAGNK.

This sequence belongs to the phosphate acetyltransferase and butyryltransferase family.

It carries out the reaction butanoyl-CoA + phosphate = butanoyl phosphate + CoA. It functions in the pathway lipid metabolism; butanoate metabolism. Functionally, catalyzes the conversion of butyryl-CoA through butyryl phosphate to butyrate. In Clostridium acetobutylicum (strain ATCC 824 / DSM 792 / JCM 1419 / IAM 19013 / LMG 5710 / NBRC 13948 / NRRL B-527 / VKM B-1787 / 2291 / W), this protein is Phosphate butyryltransferase (ptb).